We begin with the raw amino-acid sequence, 1197 residues long: Protein timeless homolog (1197 aa).

Residues 1 to 309 are required for homodimerization and for interaction with CRY1 and CHEK1; it reads MDLYMMNCEL…GLHNLQNYSS (309 aa). Ser281 carries the phosphoserine modification. Disordered stretches follow at residues 647–674 and 943–1002; these read STPLPRQQEPEEGDAEEEEEEEEEEELQ and RKKL…SAEN. Residues 656–673 show a composition bias toward acidic residues; sequence PEEGDAEEEEEEEEEEEL. The tract at residues 810–949 is DNA-binding domain; that stretch reads SHRAPLWSPE…KKRRKKLAPS (140 aa). Positions 963–985 are enriched in acidic residues; that stretch reads QEDPEEEDEHLPEDESEDEESEE. Residues 986-999 show a composition bias toward low complexity; that stretch reads GLPSGQGQGSSSLS. Residues 997 to 1095 form an interaction with PARP1 region; that stretch reads SLSAENLGES…TQLRRVAASL (99 aa). Residues Ser1071 and Ser1084 each carry the phosphoserine modification. The segment at 1079–1197 is required for nuclear localization; that stretch reads IPAKLSSTQL…KRFQIEDEDD (119 aa). A Phosphothreonine modification is found at Thr1086. A disordered region spans residues 1088–1197; that stretch reads LRRVAASLSQ…KRFQIEDEDD (110 aa). Acidic residues-rich tracts occupy residues 1099 to 1109 and 1143 to 1153; these read ENEEEREEEPE and TEEEATGEEEW. Phosphoserine is present on Ser1165.

It belongs to the timeless family. Monomer. Homodimer or homomultimer. Component of the circadian core oscillator, which includes the CRY proteins, CLOCK or NPAS2, ARTNL/BMAL1 or ARTNL2/BMAL2, CSKN1D and/or CSNK1E, TIMELESS, and the PER proteins. Interacts directly with PER2; the interaction with PER2 is via its second PAS domain. Interacts directly with PER1 and PER3. Interacts with CRY1. Interacts with CRY2. Interacts with CHEK1, ATR and ATRIP. Interacts with CLSPN. Interacts (via N-terminus) with TIPIN. The TIMELESS-TIPIN heterodimer binds preferably to guanine-rich quadruplex-forming (G4) DNA structures. Associates with the MCM2-7 complex. Interacts with DNA polymerases alpha, delta and epsilon. Interacts with DDX11; this interaction increases recruitment of both proteins onto chromatin in response to replication stress induction by hydroxyurea. Interacts with PARP1; interaction is direct and independent of poly-ADP-ribose. In terms of tissue distribution, predominantly and robustly expressed in proliferative organs (spleen, thymus, intestine and testis) compared to those more differentiated such as kidney and liver (at protein level). Expressed in all tissues examined including brain, heart, lung, liver, skeletal muscle, kidney, placenta, pancreas, spleen, thymus and testis. Strongly expressed in the suprachiasmatic nucleus (SCN) and pars tuberalis, moderately in the cingulate cortex, pyrimidal cell layer of the piriform cortex, periventricular part of the caudate putamen, and granular layer of the cerebellum, and weakly in the cerebral cortex, gyrus dentatus, hippocampus and thalamic nuclei. In embryonic kidney, expression is highest in regions of active ureteric bud cell branching.

It is found in the nucleus. The protein localises to the chromosome. Functionally, plays an important role in the control of DNA replication, maintenance of replication fork stability, maintenance of genome stability throughout normal DNA replication, DNA repair and in the regulation of the circadian clock. Required to stabilize replication forks during DNA replication by forming a complex with TIPIN: this complex regulates DNA replication processes under both normal and stress conditions, stabilizes replication forks and influences both CHEK1 phosphorylation and the intra-S phase checkpoint in response to genotoxic stress. During DNA replication, inhibits the CMG complex ATPase activity and activates DNA polymerases catalytic activities, coupling DNA unwinding and DNA synthesis. TIMELESS promotes TIPIN nuclear localization. Plays a role in maintaining processive DNA replication past genomic guanine-rich DNA sequences that form G-quadruplex (G4) structures, possibly together with DDX1. Involved in cell survival after DNA damage or replication stress by promoting DNA repair. In response to double-strand breaks (DSBs), accumulates at DNA damage sites and promotes homologous recombination repair via its interaction with PARP1. May be specifically required for the ATR-CHEK1 pathway in the replication checkpoint induced by hydroxyurea or ultraviolet light. Involved in the determination of period length and in the DNA damage-dependent phase advancing of the circadian clock. Negatively regulates CLOCK|NPAS2-ARTNL/BMAL1|ARTNL2/BMAL2-induced transactivation of PER1 possibly via translocation of PER1 into the nucleus. May also play an important role in epithelial cell morphogenesis and formation of branching tubules. The sequence is that of Protein timeless homolog from Mus musculus (Mouse).